A 1341-amino-acid polypeptide reads, in one-letter code: WD repeat-containing protein 19 (1341 aa).

WD repeat units follow at residues 11–51, 52–92, 95–134, 137–175, 273–311, and 317–356; these read SWLG…RSEI, SLPG…TSQL, GMRDQMSFLLWSKIGSFLAVGTIKGNLLIYNHQTSRKIPV, KHTKKITCGCWNSENLLALGGEDKMITVSNQEGDTIRQT, DHKDNLTSVALSQTLNKAATCGDNCIKIHDLTELRDMYA, and DENKGLGTLSWTDDGQLLALSTQRGSLHVFLTKLPILGDA. TPR repeat units lie at residues 736–769, 775–808, 840–873, 895–928, 951–984, and 1020–1053; these read AQDLYLASNCPVAALEMRRDLQHWDSALQLAKRL, PFISKEYAIQLEFTGDYVNALAHYEKGITGDNKE, RVLKRDCGAILENMKQFSEAAQLYEKGQYYDRAA, PKIHLQYAKAKEADGRYKEAVVAYENAKQWNSVI, LDGAKMVARFFLQLGDYGSAIQFLVLSKCNNEAF, and EKRHFQAGKFFLLCGQYSRALKHFLKCPSSEDNV.

In terms of assembly, component of the IFT complex A (IFT-A) complex. IFT-A complex is divided into a core subcomplex composed of IFT122:IFT140:WDR19 which is associated with TULP3 and a peripheral subcomplex composed of IFT43:WDR35:TTC21B. Interacts (via C-terminal region) with IFT122 (via C-terminal region). Interacts with BBS1. Interacts with TTC25. Tissue-specific expression of isoforms. Expressed in the prostate, testis, epididymis, submaxillary and salivary glands. Expressed in ependymal cells lining brain ventricles (at protein level).

The protein localises to the cell projection. Its subcellular location is the cilium. It localises to the cytoplasm. The protein resides in the cytoskeleton. It is found in the cilium basal body. The protein localises to the photoreceptor outer segment. Its subcellular location is the flagellum. Functionally, as component of the IFT complex A (IFT-A), a complex required for retrograde ciliary transport and entry into cilia of G protein-coupled receptors (GPCRs), it is involved in cilia function and/or assembly. Essential for functional IFT-A assembly and ciliary entry of GPCRs. Associates with the BBSome complex to mediate ciliary transport. This is WD repeat-containing protein 19 from Mus musculus (Mouse).